The chain runs to 511 residues: Adenosine deaminase 2 (511 aa).

The N-terminal stretch at 1-29 (MLVDGPSEWPALRFLLLAVAMSFFGSALS) is a signal peptide. The interval 30–100 (IDETRAHLLL…HLIERSQVFN (71 aa)) is dimerization. His112 and His114 together coordinate Zn(2+). Residue Asp115 participates in substrate binding. N-linked (GlcNAc...) asparagine glycosylation occurs at Asn127. The interval 127 to 185 (NVTYRPHCHICFTPKGIMQFRFAHPTPRTSEKCSKWILLEDYRKRVQNVTEFDDSLLRN) is PRB domain. The cysteines at positions 137 and 159 are disulfide-linked. N-linked (GlcNAc...) asparagine glycans are attached at residues Asn174 and Asn185. Substrate-binding positions include 204 to 211 (WSKFETIF), His293, and Gly326. Residue His356 coordinates Zn(2+). Glu359 serves as the catalytic Proton donor. N-linked (GlcNAc...) asparagine glycosylation is present at Asn378. His384 functions as the Proton acceptor in the catalytic mechanism. Asp441 is a Zn(2+) binding site. Asp442 is a substrate binding site.

It belongs to the metallo-dependent hydrolases superfamily. Adenosine and AMP deaminases family. ADGF subfamily. In terms of assembly, homodimer. Interacts with adenosine receptors. Binds heparin. The cofactor is Zn(2+).

The protein localises to the secreted. It catalyses the reaction adenosine + H2O + H(+) = inosine + NH4(+). In terms of biological role, adenosine deaminase that may contribute to the degradation of extracellular adenosine, a signaling molecule that controls a variety of cellular responses. Requires elevated adenosine levels for optimal enzyme activity. Binds to cell surfaces via proteoglycans and may play a role in the regulation of cell proliferation and differentiation, independently of its enzyme activity. This is Adenosine deaminase 2 from Pongo abelii (Sumatran orangutan).